Consider the following 426-residue polypeptide: Bile acid CoA-transferase BaiF (426 aa).

Asp168 (nucleophile) is an active-site residue.

Belongs to the CoA-transferase III family.

It catalyses the reaction lithocholoyl-CoA + cholate = choloyl-CoA + lithocholate. It carries out the reaction deoxycholoyl-CoA + cholate = choloyl-CoA + deoxycholate. The enzyme catalyses allodeoxycholoyl-CoA + cholate = allodeoxycholate + choloyl-CoA. The catalysed reaction is allocholate + deoxycholoyl-CoA = allocholoyl-CoA + deoxycholate. It catalyses the reaction allocholate + lithocholoyl-CoA = allocholoyl-CoA + lithocholate. It carries out the reaction allocholate + allodeoxycholoyl-CoA = allocholoyl-CoA + allodeoxycholate. The enzyme catalyses lithocholoyl-CoA + chenodeoxycholate = chenodeoxycholoyl-CoA + lithocholate. The catalysed reaction is ursodeoxycholate + deoxycholoyl-CoA = ursodeoxycholoyl-CoA + deoxycholate. It catalyses the reaction ursodeoxycholate + lithocholoyl-CoA = ursodeoxycholoyl-CoA + lithocholate. It carries out the reaction allodeoxycholoyl-CoA + ursodeoxycholate = ursodeoxycholoyl-CoA + allodeoxycholate. The enzyme catalyses beta-muricholate + lithocholoyl-CoA = beta-muricholoyl-CoA + lithocholate. The catalysed reaction is beta-muricholate + deoxycholoyl-CoA = beta-muricholoyl-CoA + deoxycholate. It catalyses the reaction beta-muricholate + allodeoxycholoyl-CoA = beta-muricholoyl-CoA + allodeoxycholate. It carries out the reaction choloyl-CoA + H2O = cholate + CoA + H(+). The enzyme catalyses chenodeoxycholoyl-CoA + H2O = chenodeoxycholate + CoA + H(+). Its pathway is lipid metabolism; bile acid biosynthesis. Its function is as follows. Functions in the bile acid 7alpha-dehydroxylation pathway, which forms secondary bile acids via the 7alpha-dehydroxylation of primary bile acids, and is carried out by intestinal anaerobic bacteria. Acts as a bile acid CoA transferase with broad bile acid substrate specificity. Catalyzes the transfer of the CoA moiety of secondary bile acid-CoA compounds to primary bile acids. Can use lithocholoyl-CoA, deoxycholoyl-CoA and allodeoxycholoyl-CoA as bile acid CoA donors and cholate, allocholate, chenodeoxycholate, ursodeoxycholate, and beta-muricholate as bile acid CoA acceptors. Also displays CoA hydrolase activity, being able to catalyze the hydrolysis of choloyl-CoA, 3-dehydrocholoyl-CoA, and chenodeoxycholoyl-CoA, releasing CoA and the corresponding free bile acid. However, this latter activity may not represent the actual activity of this enzyme, since using a transferase rather than hydrolase, the bacteria conserve the thioester bond energy, saving ATP molecules. Shows no hydrolytic activity with acetyl-CoA, isovaleryl-CoA, palmitoyl-CoA, or phenylacetyl-CoA as substrates. In Clostridium scindens (strain JCM 10418 / VPI 12708), this protein is Bile acid CoA-transferase BaiF.